Reading from the N-terminus, the 283-residue chain is N-terminal Xaa-Pro-Lys N-methyltransferase 2 (283 aa).

S-adenosyl-L-methionine-binding positions include G124, R129, D146, 174–175, Q190, and H195; that span reads LQ.

This sequence belongs to the methyltransferase superfamily. NTM1 family.

It localises to the nucleus. It carries out the reaction N-terminal L-alanyl-L-prolyl-L-lysyl-[protein] + S-adenosyl-L-methionine = N-terminal N-methyl-L-alanyl-L-prolyl-L-lysyl-[protein] + S-adenosyl-L-homocysteine + H(+). The catalysed reaction is N-terminal L-prolyl-L-prolyl-L-lysyl-[protein] + S-adenosyl-L-methionine = N-terminal N-methyl-L-prolyl-L-prolyl-L-lysyl-[protein] + S-adenosyl-L-homocysteine + H(+). The enzyme catalyses N-terminal L-seryl-L-prolyl-L-lysyl-[protein] + S-adenosyl-L-methionine = N-terminal N-methyl-L-seryl-L-prolyl-L-lysyl-[protein] + S-adenosyl-L-homocysteine + H(+). In terms of biological role, alpha N-methyltransferase that methylates the N-terminus of target proteins containing the N-terminal motif [Ala/Pro/Ser]-Pro-Lys when the initiator Met is cleaved. Specifically catalyzes monomethylation of exposed alpha-amino group of Ala or Ser residue in the [Ala/Ser]-Pro-Lys motif and Pro in the Pro-Pro-Lys motif. Predominantly functions as a mono-methyltransferase but is also able to di-/tri-methylate the GPKRIA peptide and di-methylate the PPKRIA peptide (in vitro). May activate NTMT1 by priming its substrates for trimethylation. The sequence is that of N-terminal Xaa-Pro-Lys N-methyltransferase 2 from Homo sapiens (Human).